A 757-amino-acid chain; its full sequence is Exo-alpha-(1-&gt;6)-L-arabinopyranosidase (757 aa).

D232 is a catalytic residue.

This sequence belongs to the glycosyl hydrolase 3 family. In terms of assembly, homotetramer.

Completely inhibited by Cu(2+) and Fe(2+). Catalyzes the hydrolysis of a non-reducing terminal alpha-L-arabinopyranosidic linkage in ginsenoside Rb2 (alpha-L-arabinopyranosyl-(1-&gt;6)-alpha-D-glucopyranosyl) to release alpha-D-glucopyranosyl (Rd). It is not able to hydrolyze alpha-L-arabinofuranosyl-(1-&gt;6)-alpha-D-glucopyranosyl (Rc). This is Exo-alpha-(1-&gt;6)-L-arabinopyranosidase from Bifidobacterium breve (strain ACS-071-V-Sch8b).